The primary structure comprises 107 residues: Translation initiation factor IF-1, chloroplastic (107 aa).

In terms of domain architecture, S1-like spans 8–83 (REKKNPREAK…SKGRIIYRLP (76 aa)). A disordered region spans residues 81–107 (RLPHKDSKRTEDSKDTEDLKDTKDSKG). The span at 83-107 (PHKDSKRTEDSKDTEDLKDTKDSKG) shows a compositional bias: basic and acidic residues.

It belongs to the IF-1 family. In terms of assembly, component of the 30S ribosomal translation pre-initiation complex which assembles on the 30S ribosome in the order IF-2 and IF-3, IF-1 and N-formylmethionyl-tRNA(fMet); mRNA recruitment can occur at any time during PIC assembly.

The protein resides in the plastid. It is found in the chloroplast. One of the essential components for the initiation of protein synthesis. Stabilizes the binding of IF-2 and IF-3 on the 30S subunit to which N-formylmethionyl-tRNA(fMet) subsequently binds. Helps modulate mRNA selection, yielding the 30S pre-initiation complex (PIC). Upon addition of the 50S ribosomal subunit IF-1, IF-2 and IF-3 are released leaving the mature 70S translation initiation complex. In Oryza sativa subsp. indica (Rice), this protein is Translation initiation factor IF-1, chloroplastic.